The chain runs to 197 residues: Ribosome maturation factor RimM (197 aa).

Residues 99–174 enclose the PRC barrel domain; the sequence is EDEFYQVDLI…LVVEPVAAGL (76 aa).

The protein belongs to the RimM family. In terms of assembly, binds ribosomal protein uS19.

It localises to the cytoplasm. Its function is as follows. An accessory protein needed during the final step in the assembly of 30S ribosomal subunit, possibly for assembly of the head region. Essential for efficient processing of 16S rRNA. May be needed both before and after RbfA during the maturation of 16S rRNA. It has affinity for free ribosomal 30S subunits but not for 70S ribosomes. The chain is Ribosome maturation factor RimM from Bartonella quintana (strain Toulouse) (Rochalimaea quintana).